The chain runs to 395 residues: MAGGLMADLEAFRKAQRADGPATILAIGTATPPNAVDQSTYPDYYFKITNSEHMTELKEKFQRMCDKSAIKKRYMYLTDEILKENPNVCEYMAPSLDARQDMVVVEVPRLGKEAATKAIKEWGQPKSKITHVIFCTTSGVDMPGADYQLTKLLGLRPSVKRVMMYQQGCFAGGTVLRVAKDLAENNRGARVLVVCSEITAVTFRGPSDTHLDSMVGQALFGDGAAALIVGADPIPQVEKPCFELMWTAQTILPDSDGAIDGHLREVGLTFHLLKDVPGLISKNIEKSLVEAFQQFGISDWNQLFWIAHPGGPAILDQVEAKLNLDPKKLRATRQVLSEYGNMSSACVHFILDEMRKSSNEKGCSTTGEGLDVGVLFGFGPGLTVETVVLKSVPLQ.

The active site involves cysteine 169.

The protein belongs to the thiolase-like superfamily. Chalcone/stilbene synthases family.

It catalyses the reaction (E)-4-coumaroyl-CoA + 3 malonyl-CoA + 3 H(+) = 2',4,4',6'-tetrahydroxychalcone + 3 CO2 + 4 CoA. It participates in secondary metabolite biosynthesis; flavonoid biosynthesis. Its function is as follows. The primary product of this enzyme is 4,2',4',6'-tetrahydroxychalcone (also termed naringenin-chalcone or chalcone) which can under specific conditions spontaneously isomerize into naringenin. This is Chalcone synthase 7 (CSF7) from Picea mariana (Black spruce).